Reading from the N-terminus, the 570-residue chain is Proline--tRNA ligase (570 aa).

It belongs to the class-II aminoacyl-tRNA synthetase family. ProS type 1 subfamily. Homodimer.

The protein resides in the cytoplasm. The catalysed reaction is tRNA(Pro) + L-proline + ATP = L-prolyl-tRNA(Pro) + AMP + diphosphate. Its function is as follows. Catalyzes the attachment of proline to tRNA(Pro) in a two-step reaction: proline is first activated by ATP to form Pro-AMP and then transferred to the acceptor end of tRNA(Pro). As ProRS can inadvertently accommodate and process non-cognate amino acids such as alanine and cysteine, to avoid such errors it has two additional distinct editing activities against alanine. One activity is designated as 'pretransfer' editing and involves the tRNA(Pro)-independent hydrolysis of activated Ala-AMP. The other activity is designated 'posttransfer' editing and involves deacylation of mischarged Ala-tRNA(Pro). The misacylated Cys-tRNA(Pro) is not edited by ProRS. This is Proline--tRNA ligase from Shewanella sp. (strain MR-7).